A 134-amino-acid polypeptide reads, in one-letter code: Transcription antitermination protein NusB (134 aa).

The protein belongs to the NusB family.

Involved in transcription antitermination. Required for transcription of ribosomal RNA (rRNA) genes. Binds specifically to the boxA antiterminator sequence of the ribosomal RNA (rrn) operons. This chain is Transcription antitermination protein NusB, found in Shewanella sediminis (strain HAW-EB3).